The sequence spans 155 residues: MKLQLVAVGTKMPDWVQTGFTEYLRRFPKDMPFELIEIPAGKRGKNADIKRILDKEGEQMLAAAGKNRIVTLDIPGKPWDTPQLANELERWKQDGRDVSLLIGGPEGLSPACKAAAEQSWSLSALTLPHPLVRVLVAESLYRAWSITTNHPYHRE.

S-adenosyl-L-methionine contacts are provided by residues Leu-72, Gly-103, and 122–127; that span reads LSALTL.

The protein belongs to the RNA methyltransferase RlmH family. In terms of assembly, homodimer.

The protein localises to the cytoplasm. The catalysed reaction is pseudouridine(1915) in 23S rRNA + S-adenosyl-L-methionine = N(3)-methylpseudouridine(1915) in 23S rRNA + S-adenosyl-L-homocysteine + H(+). Functionally, specifically methylates the pseudouridine at position 1915 (m3Psi1915) in 23S rRNA. This chain is Ribosomal RNA large subunit methyltransferase H, found in Salmonella dublin (strain CT_02021853).